Here is a 1221-residue protein sequence, read N- to C-terminus: DNA topoisomerase 2 (1221 aa).

Residues Asn65, Asn94, 122–124, 135–142, and 352–354 contribute to the ATP site; these read SSN, GRHGYGAK, and QNK. The region spanning 432-546 is the Toprim domain; it reads RTLIVTEGDS…SLLVRNPGFI (115 aa). Glu438, Asp515, and Asp517 together coordinate Mg(2+). The Topo IIA-type catalytic domain occupies 681–1097; sequence LAHSVDGLKP…TPVQLWLGEL (417 aa). Tyr771 functions as the O-(5'-phospho-DNA)-tyrosine intermediate in the catalytic mechanism. The tract at residues 952–961 is interaction with DNA; the sequence is GLTQRIHING. Residues 1158–1198 are disordered; sequence VPPPTKRGAGGRSDGDGGATAAGAAAAVGGRGEKKGPGRAG. The segment covering 1165 to 1177 has biased composition (gly residues); it reads GAGGRSDGDGGAT.

It belongs to the type II topoisomerase family. In terms of assembly, homodimer. The cofactor is Mg(2+). Requires Mn(2+) as cofactor. Ca(2+) serves as cofactor.

The protein resides in the nucleus. The catalysed reaction is ATP-dependent breakage, passage and rejoining of double-stranded DNA.. Control of topological states of DNA by transient breakage and subsequent rejoining of DNA strands. Topoisomerase II makes double-strand breaks. In Trypanosoma brucei brucei, this protein is DNA topoisomerase 2 (TOP2).